Here is a 241-residue protein sequence, read N- to C-terminus: Aliphatic sulfonates import ATP-binding protein SsuB (241 aa).

In terms of domain architecture, ABC transporter spans 10 to 226 (VHLHGFSRSF…RPDHPAFMQL (217 aa)). 42–49 (GESGSGKT) contacts ATP.

Belongs to the ABC transporter superfamily. Aliphatic sulfonates importer (TC 3.A.1.17.2) family. The complex is composed of two ATP-binding proteins (SsuB), two transmembrane proteins (SsuC) and a solute-binding protein (SsuA).

The protein resides in the cell inner membrane. It catalyses the reaction ATP + H2O + aliphatic sulfonate-[sulfonate-binding protein]Side 1 = ADP + phosphate + aliphatic sulfonateSide 2 + [sulfonate-binding protein]Side 1.. In terms of biological role, part of the ABC transporter complex SsuABC involved in aliphatic sulfonates import. Responsible for energy coupling to the transport system. This is Aliphatic sulfonates import ATP-binding protein SsuB from Delftia acidovorans (Pseudomonas acidovorans).